The sequence spans 307 residues: tRNA pseudouridine synthase B (307 aa).

The active-site Nucleophile is D48.

The protein belongs to the pseudouridine synthase TruB family. Type 1 subfamily.

It carries out the reaction uridine(55) in tRNA = pseudouridine(55) in tRNA. Its function is as follows. Responsible for synthesis of pseudouridine from uracil-55 in the psi GC loop of transfer RNAs. This Pasteurella multocida (strain Pm70) protein is tRNA pseudouridine synthase B.